A 454-amino-acid polypeptide reads, in one-letter code: Chromosomal replication initiator protein DnaA (454 aa).

The interval 1–81 is domain I, interacts with DnaA modulators; sequence MNNSLWQQCA…PNVVLKVGEA (81 aa). Residues 79–110 are disordered; sequence GEASPTQRDSGSPQRAAATRRKTPNFSSGNTD. The domain II stretch occupies residues 81–117; it reads ASPTQRDSGSPQRAAATRRKTPNFSSGNTDVEVPFES. Over residues 82–91 the composition is skewed to polar residues; it reads SPTQRDSGSP. Residues 118-334 are domain III, AAA+ region; that stretch reads NIHPEYTFDN…GALNRVVANV (217 aa). Residues Gly162, Gly164, Lys165, and Thr166 each coordinate ATP. Residues 335-454 form a domain IV, binds dsDNA region; that stretch reads QLTGRPITID…YRNLIRTLSS (120 aa).

This sequence belongs to the DnaA family. Oligomerizes as a right-handed, spiral filament on DNA at oriC.

The protein localises to the cytoplasm. Plays an essential role in the initiation and regulation of chromosomal replication. ATP-DnaA binds to the origin of replication (oriC) to initiate formation of the DNA replication initiation complex once per cell cycle. Binds the DnaA box (a 9 base pair repeat at the origin) and separates the double-stranded (ds)DNA. Forms a right-handed helical filament on oriC DNA; dsDNA binds to the exterior of the filament while single-stranded (ss)DNA is stabiized in the filament's interior. The ATP-DnaA-oriC complex binds and stabilizes one strand of the AT-rich DNA unwinding element (DUE), permitting loading of DNA polymerase. After initiation quickly degrades to an ADP-DnaA complex that is not apt for DNA replication. Binds acidic phospholipids. The chain is Chromosomal replication initiator protein DnaA from Idiomarina loihiensis (strain ATCC BAA-735 / DSM 15497 / L2-TR).